Here is a 673-residue protein sequence, read N- to C-terminus: Ion-translocating oxidoreductase complex subunit C (673 aa).

4Fe-4S ferredoxin-type domains are found at residues 368–397 and 407–436; these read MGAP…QQLY and KATA…VQYF. Cys-377, Cys-380, Cys-383, Cys-387, Cys-416, Cys-419, Cys-422, and Cys-426 together coordinate [4Fe-4S] cluster. The tract at residues 529 to 554 is disordered; the sequence is EARKAQARAKQAGHPMADSATSGDDP.

It belongs to the 4Fe4S bacterial-type ferredoxin family. RnfC subfamily. As to quaternary structure, the complex is composed of six subunits: RsxA, RsxB, RsxC, RsxD, RsxE and RsxG. It depends on [4Fe-4S] cluster as a cofactor.

The protein resides in the cell inner membrane. Part of a membrane-bound complex that couples electron transfer with translocation of ions across the membrane. Required to maintain the reduced state of SoxR. This is Ion-translocating oxidoreductase complex subunit C from Salmonella arizonae (strain ATCC BAA-731 / CDC346-86 / RSK2980).